The following is a 259-amino-acid chain: Isoprenyl transferase (259 aa).

The active site involves D30. D30 contributes to the Mg(2+) binding site. Substrate-binding positions include 31-34 (GNGR), W35, R43, H47, and 75-77 (STE). The active-site Proton acceptor is N78. Residues W79, R81, R198, and 204-206 (RIS) each bind substrate. E217 serves as a coordination point for Mg(2+).

It belongs to the UPP synthase family. As to quaternary structure, homodimer. It depends on Mg(2+) as a cofactor.

Its function is as follows. Catalyzes the condensation of isopentenyl diphosphate (IPP) with allylic pyrophosphates generating different type of terpenoids. The chain is Isoprenyl transferase from Caulobacter vibrioides (strain ATCC 19089 / CIP 103742 / CB 15) (Caulobacter crescentus).